The chain runs to 185 residues: Translation initiation factor IF-3 (185 aa).

It belongs to the IF-3 family. Monomer.

It localises to the cytoplasm. Functionally, IF-3 binds to the 30S ribosomal subunit and shifts the equilibrium between 70S ribosomes and their 50S and 30S subunits in favor of the free subunits, thus enhancing the availability of 30S subunits on which protein synthesis initiation begins. The polypeptide is Translation initiation factor IF-3 (Rickettsia typhi (strain ATCC VR-144 / Wilmington)).